The primary structure comprises 239 residues: Probable transcriptional regulatory protein Veis_4238 (239 aa).

The segment at methionine 1–glycine 22 is disordered.

It belongs to the TACO1 family.

Its subcellular location is the cytoplasm. The chain is Probable transcriptional regulatory protein Veis_4238 from Verminephrobacter eiseniae (strain EF01-2).